The following is a 146-amino-acid chain: uncharacterized protein (146 aa).

A helical membrane pass occupies residues 7–27; sequence FVLSITIVLVILIIIAFIWYN.

This sequence belongs to the asfivirus E146L family.

The protein localises to the host membrane. It localises to the virion. This is an uncharacterized protein from Ornithodoros (relapsing fever ticks).